A 108-amino-acid polypeptide reads, in one-letter code: Ig kappa chain V-V region HP 93G7 (108 aa).

The framework-1 stretch occupies residues 1–23; that stretch reads DIQMTQTTSSLSASLGDRVTISC. Cysteines 23 and 88 form a disulfide. Residues 24 to 34 form a complementarity-determining-1 region; sequence RASQDISNYLN. The tract at residues 35 to 49 is framework-2; sequence WYQQKPDGTVKLLIY. Positions 50-56 are complementarity-determining-2; that stretch reads YTSRLHS. The interval 57–88 is framework-3; sequence GVPSRFSGSGSGTDYSLTISNLEQEDIATYFC. Residues 89-97 form a complementarity-determining-3 region; it reads QQGNMLPRT. The interval 98–108 is framework-4; that stretch reads FGGGTKLEIKR.

This is Ig kappa chain V-V region HP 93G7 from Mus musculus (Mouse).